Here is a 121-residue protein sequence, read N- to C-terminus: Basic phospholipase A2 caudoxin (121 aa).

Cystine bridges form between Cys-25-Cys-114, Cys-27-Cys-43, Cys-42-Cys-94, Cys-48-Cys-121, Cys-49-Cys-87, Cys-56-Cys-80, and Cys-74-Cys-85. Tyr-26, Gly-28, and Gly-30 together coordinate Ca(2+). Residue His-46 is part of the active site. Asp-47 serves as a coordination point for Ca(2+). Asp-88 is an active-site residue.

It belongs to the phospholipase A2 family. Group II subfamily. D49 sub-subfamily. Monomer. Requires Ca(2+) as cofactor. In terms of tissue distribution, expressed by the venom gland.

It is found in the secreted. The catalysed reaction is a 1,2-diacyl-sn-glycero-3-phosphocholine + H2O = a 1-acyl-sn-glycero-3-phosphocholine + a fatty acid + H(+). Its function is as follows. Snake venom phospholipase A2 (PLA2) that shows anticoagulant activity and presynaptic neurotoxicity. Acts as an anticoagulant toxin by inhibiting prothrombinase complex formation. Shows about 50% of the prothrombinase complex inhibition compared to CM-IV of N.nigricollis venom. Acts as a neurotoxin by inhibiting neuromuscular transmission by blocking acetylcholine release from the nerve termini. PLA2 catalyzes the calcium-dependent hydrolysis of the 2-acyl groups in 3-sn-phosphoglycerides. The sequence is that of Basic phospholipase A2 caudoxin from Bitis caudalis (Horned adder).